Here is a 168-residue protein sequence, read N- to C-terminus: ADP-ribosylation factor-like protein 2-binding protein (168 aa).

The protein belongs to the ARL2BP family.

The protein resides in the cytoplasm. It is found in the mitochondrion intermembrane space. The protein localises to the cytoskeleton. Its subcellular location is the microtubule organizing center. It localises to the centrosome. The protein resides in the nucleus. It is found in the spindle. The protein localises to the cilium basal body. In terms of biological role, plays a role as an effector of the ADP-ribosylation factor-like protein 2, ARL2. The sequence is that of ADP-ribosylation factor-like protein 2-binding protein (arl2bp) from Danio rerio (Zebrafish).